Here is a 945-residue protein sequence, read N- to C-terminus: Splicing factor, suppressor of white-apricot homolog (945 aa).

2 disordered regions span residues 1–28 (MYGA…GTGT) and 156–185 (DYYD…EENE). 2 stretches are compositionally biased toward basic and acidic residues: residues 9–21 (AKPE…KEEA) and 169–178 (PSKQREKNEA). The stretch at 211 to 253 (IIERTANFVCKQGAQFEIMLKAKQARNSQFDFLRFDHYLNPYY) is one SURP motif 1 repeat. The segment at 271-301 (SKNEEKKKSGPTSDNEEEDDEEDGSYLHPSL) is disordered. Serine 283 carries the phosphoserine modification. Residues 284–294 (DNEEEDDEEDG) are compositionally biased toward acidic residues. N6-acetyllysine is present on lysine 315. 2 disordered regions span residues 332-355 (KAQA…PSQV) and 403-448 (SSSP…PVAI). A compositionally biased stretch (low complexity) spans 335–352 (ADSSAPAPPTADGTPAQP). Residues 412–426 (VPPPPGTTPPPPPTT) show a composition bias toward pro residues. Residues 427–447 (AEPSSGVTSTTTTTSALAPVA) are compositionally biased toward low complexity. The SURP motif 2 repeat unit spans residues 458–498 (VIDKLAEYVARNGLKFETSVRAKNDQRFEFLQPWHQYNAYY). Disordered stretches follow at residues 512–564 (GSTQ…KSTV), 589–680 (PLEK…QAER), and 712–921 (DTGV…VQSK). Positions 514–527 (TQAASTAEEAPTET) are enriched in low complexity. A compositionally biased stretch (acidic residues) spans 528–540 (AVEESGEAGEDGA). Positions 589–598 (PLEKNRVKLD) are enriched in basic and acidic residues. Phosphoserine is present on residues serine 601 and serine 621. Over residues 615-630 (SSVANPSPAAAPPSVA) the composition is skewed to low complexity. Residues 632 to 686 (EEKKPQLTQEELEAKQAKQKLEDRLAAAAREKLAQASKESKEKQLQAERKRKAAL) are a coiled coil. Threonine 639 bears the Phosphothreonine mark. Basic and acidic residues-rich tracts occupy residues 643–679 (LEAK…LQAE) and 733–752 (KPPE…EERE). Basic residues-rich tracts occupy residues 753 to 787 (KKKK…KAKH) and 795 to 810 (TVRR…RRRA). Positions 811 to 821 (HSPERRREERS) are enriched in basic and acidic residues. A phosphoserine mark is found at serine 829 and serine 831. Residues 835–861 (SRKRTRSRSPHEKKKKRRSRSRTKAKA) are compositionally biased toward basic residues. Residues 871–894 (QAAQRPSAHSAHSASISPVESRGS) are compositionally biased toward low complexity. Residues 895–908 (SQERSRGVSQEKDG) show a composition bias toward basic and acidic residues. A phosphoserine mark is found at serine 899 and serine 903. The span at 909 to 920 (QISSAIVSSVQS) shows a compositional bias: low complexity.

The protein localises to the nucleus. Functionally, plays a role as an alternative splicing regulator. Regulates its own expression at the level of RNA processing. Also regulates the splicing of fibronectin and CD45 genes. May act, at least in part, by interaction with other R/S-containing splicing factors. Represses the splicing of MAPT/Tau exon 10. This chain is Splicing factor, suppressor of white-apricot homolog (Sfswap), found in Mus musculus (Mouse).